Consider the following 370-residue polypeptide: MLAPGSSPGQRGRLALQWRQVSWITCWIALYAVEALPTCPFSCKCDSRSLEVDCSGLGLTTVPPDVPAATRTLLLLNNKLSALPSWAFANLSSLQRLDLSNNFLDRLPRSIFGDLTNLTELQLRNNSIRTLDRDLLRHSPLLRHLDLSINGLAQLPPGLFDGLLALRSLSLRSNRLQNLDRLTFEPLANLQLLQVGDNPWECDCNLREFKHWMEWFSYRGGRLDQLACTLPKELRGKDMRMVPMEMFNYCSQLEDENSSAGLDIPGPPCTKASPEPAKPKPGAEPEPEPSTACPQKQRHRPASVRRAMGTVIIAGVVCGVVCIMMVVAAAYGCIYASLMAKYHRELKKRQPLMGDPEGEHEDQKQISSVA.

The N-terminal stretch at 1 to 35 is a signal peptide; the sequence is MLAPGSSPGQRGRLALQWRQVSWITCWIALYAVEA. In terms of domain architecture, LRRNT spans 36–68; it reads LPTCPFSCKCDSRSLEVDCSGLGLTTVPPDVPA. Topologically, residues 36 to 310 are extracellular; the sequence is LPTCPFSCKC…PASVRRAMGT (275 aa). LRR repeat units follow at residues 69-90, 93-114, 117-139, 141-162, and 165-186; these read ATRTLLLLNNKLSALPSWAFAN, SLQRLDLSNNFLDRLPRSIFGD, NLTELQLRNNSIRTLDRDLLRHS, LLRHLDLSINGLAQLPPGLFDG, and ALRSLSLRSNRLQNLDRLTFEP. N-linked (GlcNAc...) asparagine glycosylation occurs at Asn90. Residues Asn117 and Asn125 are each glycosylated (N-linked (GlcNAc...) asparagine). The LRRCT domain occupies 198–252; sequence NPWECDCNLREFKHWMEWFSYRGGRLDQLACTLPKELRGKDMRMVPMEMFNYCSQ. Asn257 is a glycosylation site (N-linked (GlcNAc...) asparagine). Positions 261-300 are disordered; sequence GLDIPGPPCTKASPEPAKPKPGAEPEPEPSTACPQKQRHR. A helical membrane pass occupies residues 311–331; sequence VIIAGVVCGVVCIMMVVAAAY. Residues 332-370 lie on the Cytoplasmic side of the membrane; sequence GCIYASLMAKYHRELKKRQPLMGDPEGEHEDQKQISSVA. Residues 351 to 370 are disordered; it reads PLMGDPEGEHEDQKQISSVA.

It is found in the membrane. The protein is Leucine-rich repeat and transmembrane domain-containing protein 2 (LRTM2) of Homo sapiens (Human).